The following is a 124-amino-acid chain: Small ribosomal subunit protein uS13 (124 aa).

The disordered stretch occupies residues 95–124 (GLPVNGQRTRTNARSSKGPRRTVAGKKKAR). The segment covering 100-109 (GQRTRTNARS) has biased composition (polar residues). Residues 111-124 (KGPRRTVAGKKKAR) show a composition bias toward basic residues.

The protein belongs to the universal ribosomal protein uS13 family. In terms of assembly, part of the 30S ribosomal subunit. Forms a loose heterodimer with protein S19. Forms two bridges to the 50S subunit in the 70S ribosome.

Located at the top of the head of the 30S subunit, it contacts several helices of the 16S rRNA. In the 70S ribosome it contacts the 23S rRNA (bridge B1a) and protein L5 of the 50S subunit (bridge B1b), connecting the 2 subunits; these bridges are implicated in subunit movement. Contacts the tRNAs in the A and P-sites. In Tropheryma whipplei (strain TW08/27) (Whipple's bacillus), this protein is Small ribosomal subunit protein uS13.